The following is an 85-amino-acid chain: Cell division topological specificity factor (85 aa).

The protein belongs to the MinE family.

Functionally, prevents the cell division inhibition by proteins MinC and MinD at internal division sites while permitting inhibition at polar sites. This ensures cell division at the proper site by restricting the formation of a division septum at the midpoint of the long axis of the cell. This Shewanella amazonensis (strain ATCC BAA-1098 / SB2B) protein is Cell division topological specificity factor.